A 402-amino-acid polypeptide reads, in one-letter code: Type II NADH:quinone oxidoreductase (402 aa).

Residues 12 to 16 (GAGYA), 39 to 40 (NK), and Val-83 each bind FAD. Glu-172 is an active-site residue. FAD is bound by residues Asp-302, 319-320 (AQ), and Lys-379.

Belongs to the NADH dehydrogenase family. As to quaternary structure, homodimer in solution. Forms homotetramers; dimer of dimers. FAD is required as a cofactor.

The protein resides in the cell membrane. It catalyses the reaction a quinone + NADH + H(+) = a quinol + NAD(+). The catalysed reaction is a menaquinone + NADH + H(+) = a menaquinol + NAD(+). It carries out the reaction a ubiquinone + NADH + H(+) = a ubiquinol + NAD(+). With respect to regulation, inhibited by HQNO, a quinone derivative. Its function is as follows. Alternative, nonproton pumping NADH:quinone oxidoreductase that delivers electrons to the respiratory chain by oxidation of NADH and reduction of quinones, and contributes to the regeneration of NAD(+). Can use DMN, a menaquinone analog, 2,3-dimethoxy-5,6-dimethyl-benzoquinone (DDB), an ubiquinone analog, or 2,3,5,6-tetramethyl-1,4-benzoquinone (Duroquinone, DQ) a plastoquinone analog as electron acceptors. This Staphylococcus aureus (strain NCTC 8325 / PS 47) protein is Type II NADH:quinone oxidoreductase.